The sequence spans 156 residues: H/ACA ribonucleoprotein complex subunit 2-like protein (156 aa).

It belongs to the eukaryotic ribosomal protein eL8 family. In terms of assembly, component of the small nucleolar ribonucleoprotein particle containing H/ACA-type snoRNAs (H/ACA snoRNPs).

It is found in the nucleus. The protein resides in the nucleolus. In terms of biological role, required for ribosome biogenesis. Part of a complex which catalyzes pseudouridylation of rRNA. This involves the isomerization of uridine such that the ribose is subsequently attached to C5, instead of the normal N1. Pseudouridine ('psi') residues may serve to stabilize the conformation of rRNAs. This chain is H/ACA ribonucleoprotein complex subunit 2-like protein, found in Arabidopsis thaliana (Mouse-ear cress).